The primary structure comprises 195 residues: Protein LIGHT-DEPENDENT SHORT HYPOCOTYLS 4 (195 aa).

Positions 28–38 (TTTSSSSSSSS) are enriched in low complexity. Disordered stretches follow at residues 28–51 (TTTS…RYEN) and 162–195 (SQAK…SSPN). One can recognise an ALOG domain in the interval 48–175 (RYENQKRRDW…ARGISYEKKK (128 aa)). Residues 173-177 (KKKRK) carry the Nuclear localization signal motif.

Belongs to the plant homeotic and developmental regulators ALOG protein family. In terms of tissue distribution, induced by NAC054/CUC1 and NAC098/CUC2 in shoot organ boundary cells.

Its subcellular location is the nucleus. Probable transcription regulator that acts as a developmental regulator by promoting cell growth in response to light. May suppress organ differentiation in the boundary region. The sequence is that of Protein LIGHT-DEPENDENT SHORT HYPOCOTYLS 4 (LSH4) from Arabidopsis thaliana (Mouse-ear cress).